Here is a 470-residue protein sequence, read N- to C-terminus: ATP synthase subunit beta (470 aa).

157–164 lines the ATP pocket; sequence GGAGVGKT.

Belongs to the ATPase alpha/beta chains family. F-type ATPases have 2 components, CF(1) - the catalytic core - and CF(0) - the membrane proton channel. CF(1) has five subunits: alpha(3), beta(3), gamma(1), delta(1), epsilon(1). CF(0) has three main subunits: a(1), b(2) and c(9-12). The alpha and beta chains form an alternating ring which encloses part of the gamma chain. CF(1) is attached to CF(0) by a central stalk formed by the gamma and epsilon chains, while a peripheral stalk is formed by the delta and b chains.

The protein localises to the cell inner membrane. It carries out the reaction ATP + H2O + 4 H(+)(in) = ADP + phosphate + 5 H(+)(out). Its function is as follows. Produces ATP from ADP in the presence of a proton gradient across the membrane. The catalytic sites are hosted primarily by the beta subunits. This chain is ATP synthase subunit beta, found in Geobacter sulfurreducens (strain ATCC 51573 / DSM 12127 / PCA).